We begin with the raw amino-acid sequence, 120 residues long: SPbeta prophage-derived DSR anti-defense 1 (120 aa).

Belongs to the DSR anti-defense 1 family. In terms of assembly, interacts with Bacillus subtilis DSR2 (via C-terminus) in a 2:4 ratio; this interaction leads to the absence of activation of the NADase defense activity of DSR2.

Functionally, counteracts the defense-associated sirtuin 2 (DSR2) defense system of the host. Inhibits the NADase activity of host DSR2 by competing with the tail tube protein that normally activates DSR2. The protein is SPbeta prophage-derived DSR anti-defense 1 (yotI) of Bacillus subtilis (strain 168).